The primary structure comprises 150 residues: Large ribosomal subunit protein uL15 (150 aa).

The disordered stretch occupies residues 1-55 (MADNEILQMHDLKPAPGAKKDRTRVGRGEGSKGKTSGRGAKGQTKRNHVRPGFEG). Over residues 8–32 (QMHDLKPAPGAKKDRTRVGRGEGSK) the composition is skewed to basic and acidic residues.

This sequence belongs to the universal ribosomal protein uL15 family. Part of the 50S ribosomal subunit.

Binds to the 23S rRNA. This Bifidobacterium longum (strain NCC 2705) protein is Large ribosomal subunit protein uL15.